Consider the following 825-residue polypeptide: NT-3 growth factor receptor (825 aa).

The N-terminal stretch at 1-31 is a signal peptide; the sequence is MDVSLCPAKCSFWRIFLLGSVWLDYVGSVLA. 2 cysteine pairs are disulfide-bonded: Cys32–Cys38 and Cys36–Cys45. At 32-429 the chain is on the extracellular side; the sequence is CPANCVCSKT…TVTHKPEEDT (398 aa). 3 N-linked (GlcNAc...) asparagine glycosylation sites follow: Asn68, Asn72, and Asn79. LRR repeat units follow at residues 104-125 and 128-149; these read GLQKLTIKNSGLRSIQPRAFAK and HLRYINLSSNRLTTLSWQLFQT. N-linked (GlcNAc...) asparagine glycans are attached at residues Asn133 and Asn163. The region spanning 160–209 is the LRRCT domain; the sequence is NFFNCSCDIRWMQLWQEQGEAKLNSQNLYCINTDGSQLPLFRMNISQCDL. Intrachain disulfides connect Cys164-Cys189 and Cys166-Cys207. Asn203, Asn218, Asn232, Asn259, Asn267, Asn272, and Asn294 each carry an N-linked (GlcNAc...) asparagine glycan. Ig-like C2-type domains follow at residues 210-300 and 309-382; these read PEIS…VALT and SLEE…IAKN. An intrachain disulfide couples Cys231 to Cys284. Cys320 and Cys362 are joined by a disulfide. Residues Asn375 and Asn388 are each glycosylated (N-linked (GlcNAc...) asparagine). Residues 430–453 traverse the membrane as a helical segment; it reads FGVSIAVGLAAFACVLLVVLFVMI. Residues 454–825 lie on the Cytoplasmic side of the membrane; that stretch reads NKYGRRSKFG…ATPIYLDILG (372 aa). Ser493 bears the Phosphoserine mark. Phosphotyrosine; by autocatalysis is present on Tyr516. The Protein kinase domain maps to 538-825; that stretch reads IVLKRELGEG…ATPIYLDILG (288 aa). ATP-binding positions include 544–552 and Lys572; that span reads LGEGAFGKV. The Proton acceptor role is filled by Asp679. 3 positions are modified to phosphotyrosine; by autocatalysis: Tyr705, Tyr709, and Tyr710.

It belongs to the protein kinase superfamily. Tyr protein kinase family. Insulin receptor subfamily. In terms of assembly, exists in a dynamic equilibrium between monomeric (low affinity) and dimeric (high affinity) structures. Binds SH2B2. Interacts with SQSTM1 and KIDINS220. Interacts with PTPRS. Interacts with MAPK8IP3/JIP3. Ligand-mediated auto-phosphorylation.

Its subcellular location is the membrane. It carries out the reaction L-tyrosyl-[protein] + ATP = O-phospho-L-tyrosyl-[protein] + ADP + H(+). Functionally, receptor tyrosine kinase involved in nervous system and probably heart development. Upon binding of its ligand NTF3/neurotrophin-3, NTRK3 autophosphorylates and activates different signaling pathways, including the phosphatidylinositol 3-kinase/AKT and the MAPK pathways, that control cell survival and differentiation. This Pan troglodytes (Chimpanzee) protein is NT-3 growth factor receptor (NTRK3).